We begin with the raw amino-acid sequence, 491 residues long: uncharacterized protein (491 aa).

12 consecutive transmembrane segments (helical) span residues 48–68, 85–105, 112–132, 140–160, 174–194, 202–222, 277–297, 317–337, 358–378, 383–403, 408–428, and 455–475; these read LILVSAFALLGPMASSMVAPC, ALILSIYLLVFAISPMISAPL, RMLLQVGNVIFIVFNMACGLA, IFRFLAGFGSATPMGLGSGTI, AVMSLAPLLGPTIGPVVSGFI, WIFWSTTIFSGFIFALSLPLL, PIVILCSTYMAIQYGILYLVL, LNYIASGIGLIFGSQASGIFI, VPVILLGTFFFPAGLFIYGWT, THWIGPDIGAAMFNIGLMLGW, TYLIDSFMIYAASSTAVACCV, and LLAFIVLGSSIITCSLLWFGG.

It belongs to the major facilitator superfamily.

It localises to the membrane. This is an uncharacterized protein from Schizosaccharomyces pombe (strain 972 / ATCC 24843) (Fission yeast).